A 61-amino-acid polypeptide reads, in one-letter code: Small ribosomal subunit protein uS14 (61 aa).

4 residues coordinate Zn(2+): Cys24, Cys27, Cys40, and Cys43.

The protein belongs to the universal ribosomal protein uS14 family. Zinc-binding uS14 subfamily. In terms of assembly, part of the 30S ribosomal subunit. Contacts proteins S3 and S10. It depends on Zn(2+) as a cofactor.

Functionally, binds 16S rRNA, required for the assembly of 30S particles and may also be responsible for determining the conformation of the 16S rRNA at the A site. This is Small ribosomal subunit protein uS14 from Lachnospira eligens (strain ATCC 27750 / DSM 3376 / VPI C15-48 / C15-B4) (Eubacterium eligens).